A 294-amino-acid polypeptide reads, in one-letter code: Retinoic acid receptor responder protein 1 (294 aa).

The Lumenal segment spans residues 1–20 (MQPRRQRLPAPWSGPRGPRP). Residues 21 to 42 (TAPLLALLLLLAPVAAPAGSGD) form a helical; Signal-anchor for type III membrane protein membrane-spanning segment. Cystatin LXN-type domains follow at residues 38–153 (AGSG…EKKK) and 173–276 (EIVS…TPEE). Ser40 is a glycosylation site (O-linked (Xyl...) (chondroitin sulfate) serine). Residues 43–294 (PDDPGQPQDA…AVVPTELSNF (252 aa)) lie on the Cytoplasmic side of the membrane. Residues 273–294 (TPEEASGTEEGSAVVPTELSNF) form a disordered region.

The protein belongs to the protease inhibitor I47 (latexin) family. As to quaternary structure, interacts with AGBL2, KIF11 and MAPRE1. Post-translationally, not N-glycosylated. O-glycosylated; contains chondroitin sulfate. Detected in urine (at protein level).

The protein resides in the membrane. It localises to the secreted. Inhibitor of the cytoplasmic carboxypeptidase AGBL2, may regulate the alpha-tubulin tyrosination cycle. The chain is Retinoic acid receptor responder protein 1 (RARRES1) from Homo sapiens (Human).